Consider the following 391-residue polypeptide: Ribonucleoside-diphosphate reductase small chain (391 aa).

Positions 135, 166, and 169 each coordinate Fe cation. Tyrosine 173 is an active-site residue. Positions 229, 263, and 266 each coordinate Fe cation.

This sequence belongs to the ribonucleoside diphosphate reductase small chain family. Heterodimer of a large and a small subunit. Fe cation serves as cofactor.

The protein localises to the nucleus. It is found in the cytoplasm. It catalyses the reaction a 2'-deoxyribonucleoside 5'-diphosphate + [thioredoxin]-disulfide + H2O = a ribonucleoside 5'-diphosphate + [thioredoxin]-dithiol. Functionally, provides the precursors necessary for DNA synthesis. Catalyzes the biosynthesis of deoxyribonucleotides from the corresponding ribonucleotides. This is Ribonucleoside-diphosphate reductase small chain (suc22) from Schizosaccharomyces pombe (strain 972 / ATCC 24843) (Fission yeast).